We begin with the raw amino-acid sequence, 292 residues long: T-box transcription factor tbx-9 (292 aa).

Positions Gly-10 to Asp-194 form a DNA-binding region, T-box. 2 disordered regions span residues Phe-192–Pro-227 and Ser-265–Gly-292. Composition is skewed to low complexity over residues Pro-204–Pro-223 and Ser-265–Ser-275. The segment covering Glu-280–Gly-292 has biased composition (acidic residues).

It is found in the nucleus. Transcription factor. Involved in the control of early morphogenesis of the intestine, hypodermis and body-wall muscle. Involved in regulating expression of vab-7. Appears to have partially redundant function to tbx-8. Positively modulates expression of homeobox protein lin-39, perhaps by binding to regulatory regions of the lin-39 gene, acting in the vulval lineage. This is T-box transcription factor tbx-9 (tbx-9) from Caenorhabditis elegans.